Consider the following 450-residue polypeptide: Cysteine proteinase (450 aa).

The signal sequence occupies residues 1–20; sequence MPRTEMVRFVRLPVVLLAMA. Residues 21–125 constitute a propeptide, activation peptide; the sequence is ACLASVALGS…RKTVNVTTGR (105 aa). Residue asparagine 120 is glycosylated (N-linked (GlcNAc...) asparagine). Cysteine 147 and cysteine 188 are joined by a disulfide. Active-site residues include cysteine 150, histidine 287, and asparagine 307. A 108-residue extension region spans residues 343 to 450; it reads TPPPPPPPPP…TKAARLVPHQ (108 aa). Asparagine 397 carries an N-linked (GlcNAc...) asparagine glycan.

Belongs to the peptidase C1 family.

The protein resides in the lysosome. The cysteine proteinases have a potential role in host-parasite interaction and virulence. The sequence is that of Cysteine proteinase from Trypanosoma brucei brucei.